Reading from the N-terminus, the 199-residue chain is MSILISPSDNTGWGLGTGKMYGGARKRSAEHPVHVRSYWRAAWGSRNRRRVATVAAEDAEAPQLEDVAQAPATVPIVRRHRRRVGGSARTRGLRKSARVRAAARAIVRAVNGAAAAAAPTVPASANFAAMVGAIANARAAYRHRRSRAGINPVPASRSTTRVRLPRTVRFHPSMGAFHRRWWRIHTRGRRKASVRRRRT.

S2 bears the N-acetylserine; by host mark. The propeptide occupies 2–23 (SILISPSDNTGWGLGTGKMYGG). N6-acetyllysine; by host is present on K26. The short motif at 189–199 (RRKASVRRRRT) is the Nuclear localization signal element.

Belongs to the adenoviridae histone-like nucleoprotein family. As to quaternary structure, interacts with the core-capsid bridging protein; this interaction bridges the virus core to the capsid. Interacts with host NPM1; this interaction might play a role in placing the pre-histone-like nucleoprotein on the viral DNA or regulating viral gene expression. Interacts with host HMGB1; this interaction inhibits host immune response. Cleaved near the N-terminus by the viral protease during virion maturation to form the mature protein.

The protein resides in the virion. The protein localises to the host nucleus. Its subcellular location is the host nucleolus. In terms of biological role, plays a role in the inhibition of host immune response within the nucleus. Interacts with cellular nucleosomes and immobilizes the host immune danger signal HMGB1 on chromatin. In turn, prevents HMGB1 release out of the cell and thus decreases inflammation. Also plays a role in the wrapping and condensation of the viral DNA. May also promote viral genome import into the nucleus. The protein is Pre-histone-like nucleoprotein of Murine adenovirus A serotype 1 (MAdV-1).